Reading from the N-terminus, the 46-residue chain is U-limacoditoxin(6)-Dv61 (46 aa).

The signal sequence occupies residues 1 to 19; sequence MSKLLVLLMTTALATLAQA.

This sequence belongs to the limacoditoxin-6 family. Expressed by the venom secretory cell of the spine. The spine is a cuticular structure containing a single large nucleated venom-secreting cell at its base. It is an independent unit capable of producing, storing and injecting venom. On the back of D.vulnerans caterpillars, spines are grouped together by 50 to 100 to form scoli, of which there are eight in D.vulnerans.

The protein localises to the secreted. In terms of biological role, probable toxin. Does not show insecticidal, antimicrobial and antiparasitic activities. Does not induce increase in intracellular calcium in mouse DRG neurons, suggesting that it does not induce pain. In Doratifera vulnerans (Mottled cup moth), this protein is U-limacoditoxin(6)-Dv61.